The primary structure comprises 331 residues: D-alanine--D-alanine ligase (331 aa).

The ATP-grasp domain maps to 121-327 (KLWYDALGIP…FSQFLENCVR (207 aa)). 151–206 (AFESWGKVFVKAARQGSSVGCYQVNQVEELSEAINKAFTFSDQVLIEKSVVPRELE) contributes to the ATP binding site. Positions 281, 294, and 296 each coordinate Mg(2+).

It belongs to the D-alanine--D-alanine ligase family. Requires Mg(2+) as cofactor. Mn(2+) serves as cofactor.

The protein resides in the cytoplasm. It carries out the reaction 2 D-alanine + ATP = D-alanyl-D-alanine + ADP + phosphate + H(+). It participates in cell wall biogenesis; peptidoglycan biosynthesis. Cell wall formation. This is D-alanine--D-alanine ligase from Vibrio atlanticus (strain LGP32) (Vibrio splendidus (strain Mel32)).